A 351-amino-acid chain; its full sequence is Cytoplasmic dynein 2 light intermediate chain 1 (351 aa).

This sequence belongs to the dynein light intermediate chain family. As to quaternary structure, light intermediate chain of the cytoplasmic dynein complex 2, a multisubunit complex composed at least of eleven different proteins. The cytoplasmic dynein 2 complex consists of two catalytic heavy chains (HCs) and a number of non-catalytic subunits presented by intermediate chains (ICs), light intermediate chains (LICs) and light chains (LCs). Among them, a heavy chain (DYNC2H1), two intermediate chains (DYNC2I2 and DYNC2I1), a light intermediate chain (DYNC2LI1), and a light chain (DYNLT2B) are unique to the dynein-2 complex, but a subset of light chains are also shared by dynein-1 and dynein-2 complexes. Dynein-2 complex is built around two copies of cytoplasmic dynein 2 heavy chain 1 (DYNC2H1). The C-terminal region of DYNC2H1 forms the motor domain, which converts the energy from ATP hydrolysis into movement. Its N-terminal region forms the tail, an extended structure that binds the other subunits and holds the two heavy chains in a homodimer. Interacts with DYNC2H1 (via N-terminus); this interaction stabilizes the dynein-2 complex structure. Expressed in bone, brain, kidney, and cartilage. Lower expression in heart, liver, lung, placenta and thymus.

Its subcellular location is the golgi apparatus. It localises to the cytoplasm. The protein localises to the cell projection. It is found in the cilium. The protein resides in the cytoskeleton. Its subcellular location is the cilium basal body. It localises to the cilium axoneme. The protein localises to the microtubule organizing center. It is found in the centrosome. In terms of biological role, acts as one of several non-catalytic accessory components of the cytoplasmic dynein 2 complex (dynein-2 complex), a motor protein complex that drives the movement of cargos along microtubules within cilia and flagella in concert with the intraflagellar transport (IFT) system, facilitating the assembly of these organelles. Involved in the regulation of ciliary length. This chain is Cytoplasmic dynein 2 light intermediate chain 1 (DYNC2LI1), found in Homo sapiens (Human).